The primary structure comprises 140 residues: Arsenate reductase (140 aa).

The Nucleophile; cysteine thioarsenate intermediate role is filled by cysteine 11.

The protein belongs to the ArsC family.

The enzyme catalyses [glutaredoxin]-dithiol + arsenate + glutathione + H(+) = glutathionyl-S-S-[glutaredoxin] + arsenite + H2O. In terms of biological role, involved in resistance to arsenate. Catalyzes the reduction of arsenate [As(V)] to arsenite [As(III)]. The resulting arsenite is then extruded from the cell via the aquaglyceroporin AqpS. Does not display antimonate reductase activity. This Rhizobium meliloti (strain 1021) (Ensifer meliloti) protein is Arsenate reductase.